The primary structure comprises 433 residues: Probable exopolygalacturonase X (433 aa).

Residues 1-21 (MKLTQATTLLLSLGLSLPVEG) form the signal peptide. The segment at 30 to 54 (VGPKPPFRPLPASTPRNKTCQVQSN) is disordered. Residues 43–54 (TPRNKTCQVQSN) show a composition bias toward polar residues. N-linked (GlcNAc...) asparagine glycosylation is found at Asn-46, Asn-127, and Asn-197. Residues 229-250 (SSNIVIQNSVINNGDDCVSFKP) form a PbH1 1 repeat. Asp-243 acts as the Proton donor in catalysis. A disulfide bridge links Cys-245 with Cys-262. 2 N-linked (GlcNAc...) asparagine glycosylation sites follow: Asn-251 and Asn-263. The PbH1 2 repeat unit spans residues 252–272 (STEILVQNLHCNGSHGISVGS). Residue His-266 is part of the active site. 5 N-linked (GlcNAc...) asparagine glycosylation sites follow: Asn-290, Asn-295, Asn-327, Asn-352, and Asn-362. Residues 325-346 (VQNITYDKMYIENVDWAIEVTQ) form a PbH1 3 repeat. One copy of the PbH1 4 repeat lies at 360-403 (PSNLTISDVYFNDLTGVTSGKNDPNVGTIICSSPDVCSGIHATN). Cys-390 and Cys-396 are disulfide-bonded.

This sequence belongs to the glycosyl hydrolase 28 family.

Its subcellular location is the secreted. The enzyme catalyses [(1-&gt;4)-alpha-D-galacturonosyl](n) + H2O = alpha-D-galacturonate + [(1-&gt;4)-alpha-D-galacturonosyl](n-1). In terms of biological role, specific in hydrolyzing the terminal glycosidic bond of polygalacturonic acid and oligogalacturonates. In Aspergillus flavus (strain ATCC 200026 / FGSC A1120 / IAM 13836 / NRRL 3357 / JCM 12722 / SRRC 167), this protein is Probable exopolygalacturonase X (pgaX).